Consider the following 119-residue polypeptide: Phospholipase A2 A2-actitoxin-Cgg2a (119 aa).

6 cysteine pairs are disulfide-bonded: cysteine 25-cysteine 119, cysteine 27-cysteine 43, cysteine 42-cysteine 101, cysteine 49-cysteine 94, cysteine 61-cysteine 87, and cysteine 78-cysteine 92. The Ca(2+) site is built by glycine 28 and glycine 30. Residue histidine 46 is part of the active site. Aspartate 47 is a Ca(2+) binding site. Residue aspartate 95 is part of the active site.

This sequence belongs to the phospholipase A2 family. As to quaternary structure, homodimer. The cofactor is Ca(2+).

Its subcellular location is the secreted. It localises to the nematocyst. The enzyme catalyses a 1,2-diacyl-sn-glycero-3-phosphocholine + H2O = a 1-acyl-sn-glycero-3-phosphocholine + a fatty acid + H(+). Its function is as follows. Sea anemone phospholipase A2 (PLA2). When incubated with plasma, this protein shows a moderate anticoagulant activity (0.15 ug of enzyme/200 uL of plasma), inhibiting clotting induced by thrombin. This enzyme also induces myotoxicity, and edema. PLA2 catalyzes the calcium-dependent hydrolysis of the 2-acyl groups in 3-sn-phosphoglycerides. This is Phospholipase A2 A2-actitoxin-Cgg2a from Condylactis gigantea (Giant Caribbean anemone).